The sequence spans 466 residues: Cysteine--tRNA ligase (466 aa).

Cysteine 28 contacts Zn(2+). Residues 30–40 carry the 'HIGH' region motif; it reads PTVYNFFHIGN. Zn(2+) is bound by residues cysteine 208, histidine 233, and glutamate 237. The short motif at 265 to 269 is the 'KMSKS' region element; it reads KMSKS. Lysine 268 lines the ATP pocket.

Belongs to the class-I aminoacyl-tRNA synthetase family. In terms of assembly, monomer. It depends on Zn(2+) as a cofactor.

It localises to the cytoplasm. It carries out the reaction tRNA(Cys) + L-cysteine + ATP = L-cysteinyl-tRNA(Cys) + AMP + diphosphate. In Clostridium perfringens (strain SM101 / Type A), this protein is Cysteine--tRNA ligase.